Here is a 549-residue protein sequence, read N- to C-terminus: Cytoplasmic trehalase (549 aa).

Residues Arg-168, 175–176, Asn-212, 221–223, 292–294, and Gly-324 contribute to the substrate site; these read WD, RSQ, and RDE. Active-site proton donor/acceptor residues include Asp-326 and Glu-509. A substrate-binding site is contributed by Glu-525.

This sequence belongs to the glycosyl hydrolase 37 family. As to quaternary structure, monomer.

It localises to the cytoplasm. The catalysed reaction is alpha,alpha-trehalose + H2O = alpha-D-glucose + beta-D-glucose. The protein operates within glycan degradation; trehalose degradation; D-glucose from alpha,alpha-trehalose: step 1/1. Its function is as follows. Hydrolyzes trehalose to glucose. Could be involved, in cells returning to low osmolarity conditions, in the utilization of the accumulated cytoplasmic trehalose, which was synthesized in response to high osmolarity. In Escherichia coli (strain 55989 / EAEC), this protein is Cytoplasmic trehalase.